Here is a 411-residue protein sequence, read N- to C-terminus: MSISFDLTIDDTRDQLARHARASLEAKPSLIGMSREEMAAALIAAGVPERQVKMRISQLWHWLYVRGVSDFADMRNISKDLRAMLAQHFTIARPEVVEEQISQDGTRKWLFRFPPRGAGRPVEIESVYIPEEGRGTLCISSQVGCTLTCSFCHTGTQKLVRNLTSEEILAQLLTARDRLGDFPDKDTPDGAMVPAEGRKITNIVMMGMGEPLYNFEEVKKALLIASDGDGPSLSKRRITLSTSGVVPEIYRTGDEIGVMLAISLHAVRDELRDILVPINKKYPLAELIKACREYPGLSNAKRITFEYVMLKDINDSLDDAKLLVKLLQGIPAKINLIPFNPWPGTNYQCSDWEQIEKFADYVNAAGYASPIRTPRGRDILAACGQLKSESERLRKSERLALEAMMIAGHGE.

Catalysis depends on Glu125, which acts as the Proton acceptor. The 250-residue stretch at 131–380 folds into the Radical SAM core domain; it reads EEGRGTLCIS…IRTPRGRDIL (250 aa). A disulfide bond links Cys138 and Cys383. Positions 145, 149, and 152 each coordinate [4Fe-4S] cluster. S-adenosyl-L-methionine contacts are provided by residues 209 to 210, Ser241, 263 to 265, and Asn340; these read GE and SLH. Catalysis depends on Cys383, which acts as the S-methylcysteine intermediate.

The protein belongs to the radical SAM superfamily. RlmN family. [4Fe-4S] cluster serves as cofactor.

It is found in the cytoplasm. It catalyses the reaction adenosine(2503) in 23S rRNA + 2 reduced [2Fe-2S]-[ferredoxin] + 2 S-adenosyl-L-methionine = 2-methyladenosine(2503) in 23S rRNA + 5'-deoxyadenosine + L-methionine + 2 oxidized [2Fe-2S]-[ferredoxin] + S-adenosyl-L-homocysteine. The catalysed reaction is adenosine(37) in tRNA + 2 reduced [2Fe-2S]-[ferredoxin] + 2 S-adenosyl-L-methionine = 2-methyladenosine(37) in tRNA + 5'-deoxyadenosine + L-methionine + 2 oxidized [2Fe-2S]-[ferredoxin] + S-adenosyl-L-homocysteine. Its function is as follows. Specifically methylates position 2 of adenine 2503 in 23S rRNA and position 2 of adenine 37 in tRNAs. m2A2503 modification seems to play a crucial role in the proofreading step occurring at the peptidyl transferase center and thus would serve to optimize ribosomal fidelity. The sequence is that of Dual-specificity RNA methyltransferase RlmN from Brucella suis biovar 1 (strain 1330).